The chain runs to 474 residues: Bifunctional protein HldE (474 aa).

Residues 1–318 form a ribokinase region; that stretch reads MKLSMPRFDQ…RAIQREEGSE (318 aa). ATP is bound at residue 194–197; that stretch reads NLSE. Residue Asp263 is part of the active site. The cytidylyltransferase stretch occupies residues 343–474; it reads FTNGCFDILH…AIVEKIRGQG (132 aa).

In the N-terminal section; belongs to the carbohydrate kinase PfkB family. It in the C-terminal section; belongs to the cytidylyltransferase family. In terms of assembly, homodimer.

It carries out the reaction D-glycero-beta-D-manno-heptose 7-phosphate + ATP = D-glycero-beta-D-manno-heptose 1,7-bisphosphate + ADP + H(+). It catalyses the reaction D-glycero-beta-D-manno-heptose 1-phosphate + ATP + H(+) = ADP-D-glycero-beta-D-manno-heptose + diphosphate. It functions in the pathway nucleotide-sugar biosynthesis; ADP-L-glycero-beta-D-manno-heptose biosynthesis; ADP-L-glycero-beta-D-manno-heptose from D-glycero-beta-D-manno-heptose 7-phosphate: step 1/4. It participates in nucleotide-sugar biosynthesis; ADP-L-glycero-beta-D-manno-heptose biosynthesis; ADP-L-glycero-beta-D-manno-heptose from D-glycero-beta-D-manno-heptose 7-phosphate: step 3/4. In terms of biological role, catalyzes the phosphorylation of D-glycero-D-manno-heptose 7-phosphate at the C-1 position to selectively form D-glycero-beta-D-manno-heptose-1,7-bisphosphate. Its function is as follows. Catalyzes the ADP transfer from ATP to D-glycero-beta-D-manno-heptose 1-phosphate, yielding ADP-D-glycero-beta-D-manno-heptose. This chain is Bifunctional protein HldE, found in Pseudomonas syringae pv. syringae (strain B728a).